Here is a 242-residue protein sequence, read N- to C-terminus: 1-(5-phosphoribosyl)-5-[(5-phosphoribosylamino)methylideneamino] imidazole-4-carboxamide isomerase (242 aa).

D10 functions as the Proton acceptor in the catalytic mechanism. Catalysis depends on D131, which acts as the Proton donor.

It belongs to the HisA/HisF family.

It is found in the cytoplasm. It catalyses the reaction 1-(5-phospho-beta-D-ribosyl)-5-[(5-phospho-beta-D-ribosylamino)methylideneamino]imidazole-4-carboxamide = 5-[(5-phospho-1-deoxy-D-ribulos-1-ylimino)methylamino]-1-(5-phospho-beta-D-ribosyl)imidazole-4-carboxamide. It functions in the pathway amino-acid biosynthesis; L-histidine biosynthesis; L-histidine from 5-phospho-alpha-D-ribose 1-diphosphate: step 4/9. The sequence is that of 1-(5-phosphoribosyl)-5-[(5-phosphoribosylamino)methylideneamino] imidazole-4-carboxamide isomerase from Bifidobacterium animalis subsp. lactis (strain AD011).